The primary structure comprises 330 residues: Methionyl-tRNA formyltransferase (330 aa).

Residue 112–115 participates in (6S)-5,6,7,8-tetrahydrofolate binding; sequence SLLP.

This sequence belongs to the Fmt family.

The enzyme catalyses L-methionyl-tRNA(fMet) + (6R)-10-formyltetrahydrofolate = N-formyl-L-methionyl-tRNA(fMet) + (6S)-5,6,7,8-tetrahydrofolate + H(+). Its function is as follows. Attaches a formyl group to the free amino group of methionyl-tRNA(fMet). The formyl group appears to play a dual role in the initiator identity of N-formylmethionyl-tRNA by promoting its recognition by IF2 and preventing the misappropriation of this tRNA by the elongation apparatus. The polypeptide is Methionyl-tRNA formyltransferase (Synechococcus sp. (strain RCC307)).